The following is a 55-amino-acid chain: MAKAATIKIKLLSSADTGVFYVTKKNSRTKTDKIVLKKYDPVARKHVEFRETKIK.

This sequence belongs to the bacterial ribosomal protein bL33 family.

In Azorhizobium caulinodans (strain ATCC 43989 / DSM 5975 / JCM 20966 / LMG 6465 / NBRC 14845 / NCIMB 13405 / ORS 571), this protein is Large ribosomal subunit protein bL33.